The primary structure comprises 417 residues: Serine hydroxymethyltransferase 2 (417 aa).

(6S)-5,6,7,8-tetrahydrofolate-binding positions include leucine 121 and glycine 125–leucine 127. Lysine 229 carries the N6-(pyridoxal phosphate)lysine modification. Serine 354–phenylalanine 356 lines the (6S)-5,6,7,8-tetrahydrofolate pocket.

Belongs to the SHMT family. As to quaternary structure, homodimer. Requires pyridoxal 5'-phosphate as cofactor.

The protein resides in the cytoplasm. The catalysed reaction is (6R)-5,10-methylene-5,6,7,8-tetrahydrofolate + glycine + H2O = (6S)-5,6,7,8-tetrahydrofolate + L-serine. Its pathway is one-carbon metabolism; tetrahydrofolate interconversion. The protein operates within amino-acid biosynthesis; glycine biosynthesis; glycine from L-serine: step 1/1. Its function is as follows. Catalyzes the reversible interconversion of serine and glycine with tetrahydrofolate (THF) serving as the one-carbon carrier. This reaction serves as the major source of one-carbon groups required for the biosynthesis of purines, thymidylate, methionine, and other important biomolecules. Also exhibits THF-independent aldolase activity toward beta-hydroxyamino acids, producing glycine and aldehydes, via a retro-aldol mechanism. The polypeptide is Serine hydroxymethyltransferase 2 (Pseudomonas fluorescens (strain Pf0-1)).